We begin with the raw amino-acid sequence, 472 residues long: uncharacterized protein (472 aa).

The next 14 helical transmembrane spans lie at 14–34, 53–73, 80–100, 113–133, 142–162, 169–189, 202–222, 227–247, 263–283, 302–322, 333–353, 359–379, 405–427, and 437–457; these read VIVG…TLLI, WLTT…AFLI, ALLI…AFAP, AAGA…IFPI, MVGL…GWAV, SLFY…SILM, ILSV…FSSV, WSSS…LLFI, FTFG…ALLI, FDTG…SPII, GLAI…MQLT, AWIV…MMPV, VGGS…HAGT, and GMNA…LLSF.

The protein belongs to the major facilitator superfamily. EmrB family.

The protein localises to the cell membrane. This is an uncharacterized protein from Bacillus subtilis (strain 168).